The following is a 325-amino-acid chain: Foldase protein PrsA (325 aa).

Positions Met1–Ala20 are cleaved as a signal peptide. Cys21 carries the N-palmitoyl cysteine lipid modification. The S-diacylglycerol cysteine moiety is linked to residue Cys21. A PpiC domain is found at Glu139 to Lys245. Disordered stretches follow at residues Glu159 to Gly202 and Pro303 to Ser325.

This sequence belongs to the PrsA family.

The protein resides in the cell membrane. It carries out the reaction [protein]-peptidylproline (omega=180) = [protein]-peptidylproline (omega=0). Its function is as follows. Plays a major role in protein secretion by helping the post-translocational extracellular folding of several secreted proteins. The polypeptide is Foldase protein PrsA (Staphylococcus epidermidis (strain ATCC 12228 / FDA PCI 1200)).